The primary structure comprises 303 residues: uncharacterized protein (303 aa).

One can recognise an HTH araC/xylS-type domain in the interval 183 to 281 (KDILFYLNNN…GCSPSDYRRQ (99 aa)). 2 DNA-binding regions (H-T-H motif) span residues 200 to 221 (EQLS…TKEY) and 248 to 271 (QAEI…LRHV).

This is an uncharacterized protein from Escherichia coli (strain K12).